The sequence spans 374 residues: NAD-capped RNA hydrolase ndx-9 (374 aa).

Positions 181, 184, 199, and 202 each coordinate Zn(2+). Residues Y207, 243–245 (AGF), E259, E263, and E307 each bind substrate. A Nudix hydrolase domain is found at 208-336 (PTFSPVSITL…LADPLLKNLP (129 aa)). The Mg(2+) site is built by A243, E259, E263, and E307. The short motif at 244-265 (GFAHSGESMAECARREIAEEVG) is the Nudix box element. The Microbody targeting signal motif lies at 367 to 369 (LEN).

It belongs to the Nudix hydrolase family. NudC subfamily. As to quaternary structure, homodimer. The cofactor is Mg(2+). Requires Mn(2+) as cofactor. Zn(2+) is required as a cofactor.

The catalysed reaction is a 5'-end NAD(+)-phospho-ribonucleoside in mRNA + H2O = a 5'-end phospho-adenosine-phospho-ribonucleoside in mRNA + beta-nicotinamide D-ribonucleotide + 2 H(+). The enzyme catalyses NAD(+) + H2O = beta-nicotinamide D-ribonucleotide + AMP + 2 H(+). It catalyses the reaction NADH + H2O = reduced beta-nicotinamide D-ribonucleotide + AMP + 2 H(+). Its function is as follows. mRNA decapping enzyme that specifically removes the nicotinamide adenine dinucleotide (NAD) cap from a subset of mRNAs by hydrolyzing the diphosphate linkage to produce nicotinamide mononucleotide (NMN) and 5' monophosphate mRNA. The NAD-cap is present at the 5'-end of some RNAs; in contrast to the canonical N7 methylguanosine (m7G) cap, the NAD cap promotes mRNA decay. Mediates the hydrolysis of some nucleoside diphosphate derivatives. This chain is NAD-capped RNA hydrolase ndx-9 (ndx-9), found in Caenorhabditis elegans.